The chain runs to 192 residues: Signal peptidase complex catalytic subunit SEC11C (192 aa).

The Cytoplasmic segment spans residues 1–28; sequence MVRAGAVGTHLPTSSLDIFGDLRKMNKR. Residues 29–48 traverse the membrane as a helical; Signal-anchor for type II membrane protein segment; the sequence is QLYYQVLNFAMIVSSALMIW. The Lumenal portion of the chain corresponds to 49 to 192; the sequence is KGLIVLTGSE…GAYVLLKRES (144 aa). Active-site charge relay system residues include serine 68, histidine 108, and aspartate 134. Residues 177–188 form a C-terminal short (CTS) helix region; it reads ALVAVMGAYVLL.

Belongs to the peptidase S26B family. Component of the signal peptidase complex paralog C (SPC-C) composed of a catalytic subunit SEC11C and three accessory subunits SPCS1, SPCS2 and SPCS3. Within the complex, interacts with SPCS2 and SPCS3. The complex induces a local thinning of the ER membrane which is used to measure the length of the signal peptide (SP) h-region of protein substrates. This ensures the selectivity of the complex towards h-regions shorter than 18-20 amino acids. In terms of processing, may undergo processing at the N-terminus.

The protein localises to the endoplasmic reticulum membrane. It catalyses the reaction Cleavage of hydrophobic, N-terminal signal or leader sequences from secreted and periplasmic proteins.. Its function is as follows. Catalytic component of the signal peptidase complex (SPC) which catalyzes the cleavage of N-terminal signal sequences from nascent proteins as they are translocated into the lumen of the endoplasmic reticulum. Specifically cleaves N-terminal signal peptides that contain a hydrophobic alpha-helix (h-region) shorter than 18-20 amino acids. The chain is Signal peptidase complex catalytic subunit SEC11C (Sec11c) from Rattus norvegicus (Rat).